We begin with the raw amino-acid sequence, 58 residues long: Small ribosomal subunit protein bS21 (58 aa).

A disordered region spans residues 35–58 (REHYESPSVRRKKKSEAARKRRYK). The segment covering 43 to 58 (VRRKKKSEAARKRRYK) has biased composition (basic residues).

Belongs to the bacterial ribosomal protein bS21 family.

The protein is Small ribosomal subunit protein bS21 of Acetivibrio thermocellus (strain ATCC 27405 / DSM 1237 / JCM 9322 / NBRC 103400 / NCIMB 10682 / NRRL B-4536 / VPI 7372) (Clostridium thermocellum).